The following is a 203-amino-acid chain: MELATMKTLVMLVLGMHYWCASGFPVYDYDPSSLQEALSASVAKVNSQSLSPYLFRATRSSLKRVNVLDEDTLVMNLEFTVQETTCLRESGDPSTCAFQRGYSVPTAACRSTVQMSKGQVKDVWAHCRWASTSESNSSEEMIFGDMARSHRRRNDYLLGFLYDEPKGEQFYDRSIEITRRGHPPAHRRFLNLQRRARVNSGFE.

The first 23 residues, 1 to 23 (MELATMKTLVMLVLGMHYWCASG), serve as a signal peptide directing secretion. 2 disulfides stabilise this stretch: cysteine 86–cysteine 96 and cysteine 109–cysteine 127. Position 90 is a phosphoserine (serine 90). A phosphoserine mark is found at serine 137, serine 138, and serine 174.

The protein belongs to the SPP2 family. Post-translationally, multiply phosphorylated at serine residues. In terms of processing, phosphorylation sites are present in the extracellular medium.

The protein resides in the secreted. Could coordinate an aspect of bone turnover. The protein is Secreted phosphoprotein 24 (Spp2) of Rattus norvegicus (Rat).